A 141-amino-acid chain; its full sequence is Flagellar assembly factor FliW (141 aa).

It belongs to the FliW family. In terms of assembly, interacts with translational regulator CsrA and flagellin(s).

It localises to the cytoplasm. Functionally, acts as an anti-CsrA protein, binds CsrA and prevents it from repressing translation of its target genes, one of which is flagellin. Binds to flagellin and participates in the assembly of the flagellum. The polypeptide is Flagellar assembly factor FliW (Clostridium acetobutylicum (strain ATCC 824 / DSM 792 / JCM 1419 / IAM 19013 / LMG 5710 / NBRC 13948 / NRRL B-527 / VKM B-1787 / 2291 / W)).